The chain runs to 319 residues: Coproporphyrin III ferrochelatase 2 (319 aa).

Fe-coproporphyrin III is bound by residues tyrosine 13, arginine 30, 46–47, serine 54, and tyrosine 125; that span reads RY. 2 residues coordinate Fe(2+): histidine 181 and glutamate 262.

This sequence belongs to the ferrochelatase family.

The protein localises to the cytoplasm. The enzyme catalyses Fe-coproporphyrin III + 2 H(+) = coproporphyrin III + Fe(2+). It functions in the pathway porphyrin-containing compound metabolism; protoheme biosynthesis. Functionally, involved in coproporphyrin-dependent heme b biosynthesis. Catalyzes the insertion of ferrous iron into coproporphyrin III to form Fe-coproporphyrin III. This Bacillus cereus (strain ATCC 14579 / DSM 31 / CCUG 7414 / JCM 2152 / NBRC 15305 / NCIMB 9373 / NCTC 2599 / NRRL B-3711) protein is Coproporphyrin III ferrochelatase 2.